A 270-amino-acid polypeptide reads, in one-letter code: MNFGKKVWLIGNSSEKSKKTLNKLSKILKAEHFVFDDINPEIVISVGGDGTLLRAMHMYEYQLDRVRFLGVHTGHLGFYTDFTDEDLFEVVEALYDENPAQAIHYPLICVQVSFTDGYQIVRHVLNEATIRRASKTMVGDVRISDYLFERFRGDGLSISTPTGSTAYNKSIGGAVVHPRVKAMQIAEIASLNNVVYRTLGSPMIVAEKDTITVCPAPEDDYSLTFDQLTFEYKNIKSIEFSLDGTTISFANCAHTPFWERVSKSFIGEVE.

Aspartate 49 acts as the Proton acceptor in catalysis. Residues 49–50, arginine 54, 126–127, arginine 152, aspartate 154, 165–170, alanine 189, and glutamine 227 each bind NAD(+); these read DG, NE, and TAYNKS.

This sequence belongs to the NAD kinase family. The cofactor is a divalent metal cation.

The protein resides in the cytoplasm. It carries out the reaction NAD(+) + ATP = ADP + NADP(+) + H(+). Its function is as follows. Involved in the regulation of the intracellular balance of NAD and NADP, and is a key enzyme in the biosynthesis of NADP. Catalyzes specifically the phosphorylation on 2'-hydroxyl of the adenosine moiety of NAD to yield NADP. The sequence is that of NAD kinase from Lactococcus lactis subsp. cremoris (strain MG1363).